We begin with the raw amino-acid sequence, 206 residues long: Type III pantothenate kinase (206 aa).

An ATP-binding site is contributed by Asp-5 to Lys-12. Substrate is bound by residues Tyr-67 and Gly-72–Arg-75. The active-site Proton acceptor is Asp-74. Asp-89 serves as a coordination point for K(+). Residue Ser-92 participates in ATP binding. Substrate is bound at residue Thr-144.

It belongs to the type III pantothenate kinase family. Homodimer. The cofactor is NH4(+). K(+) serves as cofactor.

The protein localises to the cytoplasm. It catalyses the reaction (R)-pantothenate + ATP = (R)-4'-phosphopantothenate + ADP + H(+). Its pathway is cofactor biosynthesis; coenzyme A biosynthesis; CoA from (R)-pantothenate: step 1/5. Catalyzes the phosphorylation of pantothenate (Pan), the first step in CoA biosynthesis. The chain is Type III pantothenate kinase from Campylobacter hominis (strain ATCC BAA-381 / DSM 21671 / CCUG 45161 / LMG 19568 / NCTC 13146 / CH001A).